The sequence spans 548 residues: Probable 2,3-bisphosphoglycerate-independent phosphoglycerate mutase (548 aa).

Mn(2+) contacts are provided by Asp20 and Ser73. The active-site Phosphoserine intermediate is Ser73. Residues His134, 164–165 (RD), Arg200, Arg207, 279–282 (RGDR), and Lys354 each bind substrate. Asp422, His426, Asp463, His464, and His493 together coordinate Mn(2+).

The protein belongs to the BPG-independent phosphoglycerate mutase family. As to quaternary structure, monomer. Requires Mn(2+) as cofactor.

The enzyme catalyses (2R)-2-phosphoglycerate = (2R)-3-phosphoglycerate. The protein operates within carbohydrate degradation; glycolysis; pyruvate from D-glyceraldehyde 3-phosphate: step 3/5. Catalyzes the interconversion of 2-phosphoglycerate and 3-phosphoglycerate. In Leptospira interrogans serogroup Icterohaemorrhagiae serovar copenhageni (strain Fiocruz L1-130), this protein is Probable 2,3-bisphosphoglycerate-independent phosphoglycerate mutase (gpmI).